The following is a 301-amino-acid chain: Recombination-associated protein RdgC (301 aa).

The protein belongs to the RdgC family.

The protein resides in the cytoplasm. The protein localises to the nucleoid. Functionally, may be involved in recombination. The sequence is that of Recombination-associated protein RdgC from Xanthomonas axonopodis pv. citri (strain 306).